The following is a 79-amino-acid chain: Small ribosomal subunit protein bS18 (79 aa).

The protein belongs to the bacterial ribosomal protein bS18 family. Part of the 30S ribosomal subunit. Forms a tight heterodimer with protein bS6.

Functionally, binds as a heterodimer with protein bS6 to the central domain of the 16S rRNA, where it helps stabilize the platform of the 30S subunit. This Renibacterium salmoninarum (strain ATCC 33209 / DSM 20767 / JCM 11484 / NBRC 15589 / NCIMB 2235) protein is Small ribosomal subunit protein bS18.